Reading from the N-terminus, the 142-residue chain is NSLHSAFSTYGEVLESKIILDRETQRSRGFGFVTFSTEEAMRSAIEGMNGKELDGRNITVNEAQSRGGRGGGGGGGYGGGRGGGGGYGRRDGGGGGYGGGGGGYGGGRGGYGGGGYGGGGGGYGGGSRGGGGYGNSDGNWRN.

Positions 1-65 (NSLHSAFSTY…RNITVNEAQS (65 aa)) constitute an RRM domain. Positions 48-101 (MNGKELDGRNITVNEAQSRGGRGGGGGGGYGGGRGGGGGYGRRDGGGGGYGGGG) are disordered. Residues 67-101 (GGRGGGGGGGYGGGRGGGGGYGRRDGGGGGYGGGG) show a composition bias toward gly residues.

In terms of biological role, possibly has a role in RNA transcription or processing during stress. The polypeptide is Glycine-rich RNA-binding protein 1 (GRP1) (Sorghum bicolor (Sorghum)).